The primary structure comprises 843 residues: Neuroligin-1 (843 aa).

The signal sequence occupies residues 1–45 (MALPRCMWPNYVWRAMMACVVHRGSGAPLTLCLLGCLLQTFHVLS). Residues 46–697 (QKLDDVDPLV…DQRDYSTELS (652 aa)) lie on the Extracellular side of the membrane. A glycan (N-linked (GlcNAc...) (complex) asparagine) is linked at Asn-109. Cys-117 and Cys-153 form a disulfide bridge. The disordered stretch occupies residues 167 to 190 (LTKKHTDDLGDNDGAEDEDIRDSG). Residues 175-186 (LGDNDGAEDEDI) are compositionally biased toward acidic residues. N-linked (GlcNAc...) (complex) asparagine glycans are attached at residues Asn-303 and Asn-343. Cystine bridges form between Cys-342-Cys-353 and Cys-512-Cys-546. Asn-547 carries an N-linked (GlcNAc...) asparagine glycan. The segment at 647 to 688 (TKVPSTDITLRPTRKNSTPVTSAFPTAKQDDPKQQPSPFSVD) is disordered. Over residues 661–670 (KNSTPVTSAF) the composition is skewed to polar residues. 2 O-linked (GalNAc...) serine glycosylation sites follow: Ser-683 and Ser-686. Residues 698–718 (VTIAVGASLLFLNILAFAALY) traverse the membrane as a helical segment. The Cytoplasmic portion of the chain corresponds to 719–843 (YKKDKRRHDV…HPHSHSTTRV (125 aa)). A disordered region spans residues 822 to 843 (GGQNNTLPHPHPHPHSHSTTRV). Over residues 831-843 (PHPHPHSHSTTRV) the composition is skewed to basic residues.

The protein belongs to the type-B carboxylesterase/lipase family. Interacts with neurexins NRXN1, NRXN2 and NRXN3. Interaction with neurexins is mediated by heparan sulfate glycan modification on neurexin. Interacts (via its C-terminus) with DLG4/PSD-95 (via PDZ domain 3). Interacts with AIP1, GOPC and PDZRN3. Interacts with NLGN3. In terms of tissue distribution, brain and arteries (at protein level). Expressed in olfactory bulb. Detected in brain.

It is found in the cell membrane. The protein resides in the postsynaptic density. The protein localises to the synaptic cleft. Its subcellular location is the synaptic cell membrane. Functionally, cell surface protein involved in cell-cell-interactions via its interactions with neurexin family members. Plays a role in synapse function and synaptic signal transmission, and probably mediates its effects by recruiting and clustering other synaptic proteins. May promote the initial formation of synapses, but is not essential for this. In vitro, triggers the de novo formation of presynaptic structures. May be involved in specification of excitatory synapses. Required to maintain wakefulness quality and normal synchrony of cerebral cortex activity during wakefulness and sleep. The protein is involved in nervous system development. The sequence is that of Neuroligin-1 (Nlgn1) from Mus musculus (Mouse).